Here is a 35-residue protein sequence, read N- to C-terminus: UPF0387 membrane protein YohO (35 aa).

Residues 6–26 (IGVIALFLFMAFGGIGGVMLA) traverse the membrane as a helical segment.

The protein belongs to the UPF0387 family.

It localises to the cell inner membrane. The chain is UPF0387 membrane protein YohO from Escherichia coli O8 (strain IAI1).